We begin with the raw amino-acid sequence, 212 residues long: Bilin biosynthesis protein PecF (212 aa).

This sequence belongs to the CpcE/RpcE/PecE family.

Its function is as follows. An enzyme involved in the biosynthesis of bilin. The chain is Bilin biosynthesis protein PecF (pecF) from Mastigocladus laminosus (Fischerella sp.).